A 232-amino-acid chain; its full sequence is Dehydrin DHN2 (232 aa).

Over residues 1–12 (MSQYQNQYGAQT) the composition is skewed to polar residues. 3 disordered regions span residues 1–92 (MSQY…STNT), 131–156 (PGTE…SGGG), and 173–232 (PGDK…CTGH). Gly residues predominate over residues 73–82 (THTGGVGGYG). The span at 131–140 (PGTEQSRTHT) shows a compositional bias: basic and acidic residues. Residues 143 to 156 (TGYGSTGYGASGGG) are compositionally biased toward gly residues. The span at 200–223 (YVREEHRVDHGEKKGIMDKIKEKL) shows a compositional bias: basic and acidic residues.

It belongs to the plant dehydrin family.

In Pisum sativum (Garden pea), this protein is Dehydrin DHN2 (DHN2).